The primary structure comprises 591 residues: Transcription factor COE1 (591 aa).

An N-acetylmethionine modification is found at Met1. Polar residues predominate over residues 1-14 (MFGIQESIQRSGSS). Residues 1–21 (MFGIQESIQRSGSSMKEEPLG) form a disordered region. A Glycyl lysine isopeptide (Lys-Gly) (interchain with G-Cter in SUMO1); alternate cross-link involves residue Lys16. A Glycyl lysine isopeptide (Lys-Gly) (interchain with G-Cter in SUMO2); alternate cross-link involves residue Lys16. The interval 63–66 (RKSN) is interaction with DNA. The C5-type zinc finger occupies 151–170 (CRVLLTHEIMCSRCCDKKSC). Interaction with DNA regions lie at residues 197-204 (NCLKNAGN) and 236-239 (NNSK). The IPT/TIG domain maps to 262 to 345 (PCIKAISPSE…KGTPGRFIYT (84 aa)). Positions 457 to 480 (GFTRNSSSVSPHGYVPSTTPQQTN) are disordered.

The protein belongs to the COE family. As to quaternary structure, homodimer. Interacts with ZNF423 and ZNF521, leading to prevent EBF1 to bind DNA and activate target genes. Interacts with CCR4-NOT component CNOT3. In terms of assembly, (Microbial infection) Interacts with Epstein-barr virus protein EBNA2.

Its subcellular location is the nucleus. Functionally, key pioneer transcription factor of B-cell specification and commitment. Recognizes variations of the palindromic sequence 5'-ATTCCCNNGGGAATT-3'. Operates in a transcription factor network to activate B-cell-specific genes and repress genes associated with alternative cell fates. For instance, positively regulates many B-cell specific genes including BCR or CD40 while repressing genes that direct cells into alternative lineages, including GATA3 and TCF7 for the T-cell lineage. In addition to its role during lymphopoiesis, controls the thermogenic gene program in adipocytes during development and in response to environmental cold. Its function is as follows. (Microbial infection) Acts as a chromatin anchor for Epstein-Barr virus EBNA2 to mediate the assembly of EBNA2 chromatin complexes in B-cells. In addition, binds to the viral LMP1 proximal promoter and promotes its expression during latency. The protein is Transcription factor COE1 (EBF1) of Homo sapiens (Human).